A 156-amino-acid chain; its full sequence is Inner membrane protein YlaC (156 aa).

Residues 1 to 35 (MTEIQRLLTETIESLNTREKRDNKPRFSISFIRKH) are Cytoplasmic-facing. Residues 36–56 (PGLFIGMYVAFFATLAVMLQS) traverse the membrane as a helical segment. Residues 57 to 58 (ET) are Periplasmic-facing. A helical transmembrane segment spans residues 59 to 79 (LSGSVWLLVVLFILLNGFFFF). Topologically, residues 80–156 (DVYPRYRYED…FTLARAESTS (77 aa)) are cytoplasmic.

It localises to the cell inner membrane. This Escherichia coli (strain K12) protein is Inner membrane protein YlaC (ylaC).